Here is a 139-residue protein sequence, read N- to C-terminus: MIKRYEACFLFKSEEIEYKCSLEEVRKSLEFFGAIDIVSNFIGERALEYPIKKQARGRYEIIEFSMEGNNLKELESRLKLIKNLLRYMILVKIVRKINTKKIKRRNFREFRDNVDKESFKGGSKIETPTGSESTDIQEK.

The disordered stretch occupies residues 118–139; it reads SFKGGSKIETPTGSESTDIQEK. Residues 126-139 show a composition bias toward polar residues; it reads ETPTGSESTDIQEK.

It belongs to the bacterial ribosomal protein bS6 family.

In terms of biological role, binds together with bS18 to 16S ribosomal RNA. The chain is Small ribosomal subunit protein bS6 from Borrelia garinii subsp. bavariensis (strain ATCC BAA-2496 / DSM 23469 / PBi) (Borreliella bavariensis).